The chain runs to 160 residues: Protein CrtK (160 aa).

The next 5 membrane-spanning stretches (helical) occupy residues 3 to 23, 37 to 57, 76 to 96, 101 to 121, and 129 to 149; these read LTLF…GAIF, WVPP…LMSI, LAFW…FFGL, GGML…VLFW, and LMFV…FSVW.

It belongs to the TspO/BZRP family.

The protein resides in the cell inner membrane. The protein operates within carotenoid biosynthesis; spheroidene biosynthesis. This chain is Protein CrtK (crtK), found in Rhodobacter capsulatus (strain ATCC BAA-309 / NBRC 16581 / SB1003).